A 472-amino-acid chain; its full sequence is Uronate isomerase (472 aa).

This sequence belongs to the metallo-dependent hydrolases superfamily. Uronate isomerase family.

The catalysed reaction is D-glucuronate = D-fructuronate. It catalyses the reaction aldehydo-D-galacturonate = keto-D-tagaturonate. It participates in carbohydrate metabolism; pentose and glucuronate interconversion. The sequence is that of Uronate isomerase from Opitutus terrae (strain DSM 11246 / JCM 15787 / PB90-1).